The sequence spans 189 residues: DAN domain family member 5 (189 aa).

The signal sequence occupies residues 1 to 22 (MLLGQLSTLLCLLSGALPTGSG). Residue N38 is glycosylated (N-linked (GlcNAc...) asparagine). Cystine bridges form between C101/C148, C115/C162, C125/C183, and C129/C185. The CTCK domain maps to 101–186 (CKAVPFVQVF…TMLIEGCHCS (86 aa)).

The protein belongs to the DAN family. Expressed in the retina, in inner segments of photoreceptors, at or close to the outer plexiform layer and in the ganglion cell layer (at protein level).

The protein localises to the secreted. In terms of biological role, antagonist of the extracellular signaling protein NODAL, which is required for correct left-right patterning during embryonic development. Antagonist of BMP and TGF-beta signaling. Independently of its role in left-right axis establishment, plays a role during heart development, possibly through the regulation of TGF-beta/Nodal signaling pathway. Displays anti-angiogenic activity by inhibiting endothelial sprouting, migration, and proliferation. Once internalized by endothelial cells, may alter their redox and glycolytic balance. In Homo sapiens (Human), this protein is DAN domain family member 5 (DAND5).